Reading from the N-terminus, the 287-residue chain is tRNA uridine(34) hydroxylase (287 aa).

The region spanning Gln132 to Tyr226 is the Rhodanese domain. Cys186 functions as the Cysteine persulfide intermediate in the catalytic mechanism.

This sequence belongs to the TrhO family.

It carries out the reaction uridine(34) in tRNA + AH2 + O2 = 5-hydroxyuridine(34) in tRNA + A + H2O. In terms of biological role, catalyzes oxygen-dependent 5-hydroxyuridine (ho5U) modification at position 34 in tRNAs. This is tRNA uridine(34) hydroxylase from Paraburkholderia phytofirmans (strain DSM 17436 / LMG 22146 / PsJN) (Burkholderia phytofirmans).